Consider the following 374-residue polypeptide: Large ribosomal subunit protein bL27m (374 aa).

The transit peptide at 1–41 (MLRLSGVKSAVRARAAAGAAFSVSLSGPQAVSLLALPLVRH) directs the protein to the mitochondrion.

Belongs to the bacterial ribosomal protein bL27 family.

The protein localises to the mitochondrion. Component of the large subunit of mitochondrial ribosome. This Yarrowia lipolytica (strain CLIB 122 / E 150) (Yeast) protein is Large ribosomal subunit protein bL27m (MRPL2).